A 572-amino-acid chain; its full sequence is Phosphoglucomutase-2 (572 aa).

Residues Thr-23, Arg-27, 126–127 (SH), and Lys-140 contribute to the substrate site. Ser-126 functions as the Phosphoserine intermediate in the catalytic mechanism. Mg(2+) is bound at residue Ser-126. Asp-308, Asp-310, and Asp-312 together coordinate Mg(2+). Substrate-binding positions include 312–313 (DR), Thr-373, 392–394 (EES), Lys-405, and Arg-527.

The protein belongs to the phosphohexose mutase family. Requires Mg(2+) as cofactor. Post-translationally, phosphorylated via a calcium-dependent protein kinase.

The protein localises to the cytoplasm. It carries out the reaction alpha-D-glucose 1-phosphate = alpha-D-glucose 6-phosphate. In terms of biological role, may be involved in membrane fusion in exocytosis. The sequence is that of Phosphoglucomutase-2 (pp63-2) from Paramecium tetraurelia.